The primary structure comprises 158 residues: Botcinic acid biosynthesis cluster B protein 16 (158 aa).

Its pathway is polyketide biosynthesis. Functionally, part of the gene cluster B that mediates the biosynthesis of botcinic acid and its botcinin derivatives, acetate-derived polyketides that contribute to virulence when combined with the sesquiterpene botrydial. Botcinic acid and its derivatives have been shown to induce chlorosis and necrosis during host plant infection, but also have antifungal activities. Two polyketide synthases, BOA6 and BOA9, are involved in the biosynthesis of botcinins. BOA6 mediates the formation of the per-methylated tetraketide core by condensation of four units of malonyl-CoA with one unit of acetyl-CoA, which would be methylated in activated methylene groups to yield a bicyclic acid intermediate that could then either be converted to botrylactone derivatives or lose the starter acetate unit through a retro-Claisen type C-C bond cleavage to yield botcinin derivatives. The second polyketide synthase, BOA9, is probably required for the biosynthesis of the tetraketide side chain of botcinins. The methyltransferase (MT) domain within BOA6 is probably responsible for the incorporation of four methyl groups. The trans-enoyl reductase BOA5 might take over the enoyl reductase function of BOA6 that misses an ER domain. The monooxygenases BOA2, BOA3 and BOA4 might be involved in further hydroxylations at C4, C5 and C8, whereas BOA7, close to BOA9, could potentially be involved in the hydroxylation at C4 in the side chain of botcinins. The polypeptide is Botcinic acid biosynthesis cluster B protein 16 (Botryotinia fuckeliana (strain B05.10) (Noble rot fungus)).